The chain runs to 103 residues: MVTQFKTASEFDSAIAQDKLVVVDFYATWCGPCKMIAPMIEKFSEQYPQADFYKLDVDELGDVAQKNEVSAMPTLLLFKNGKEVAKVVGANPAAIKQAIAANA.

The region spanning 2–103 is the Thioredoxin domain; the sequence is VTQFKTASEF…AIKQAIAANA (102 aa). Catalysis depends on nucleophile residues cysteine 30 and cysteine 33. A disulfide bond links cysteine 30 and cysteine 33. Glycyl lysine isopeptide (Lys-Gly) (interchain with G-Cter in ubiquitin) cross-links involve residues lysine 54, lysine 66, and lysine 96.

This sequence belongs to the thioredoxin family. Monomer. Part of the heterodimeric LMA1 complex together with the proteinase inhibitor PBI2. Most of the thioredoxin of yeast is in this complex rather than the well-studied monomer. LMA1 binds to the ATPase SEC18. Reversible disulfide bond formation between Cys-30 and Cys-33, reverted by thioredoxin reductase TRR1 using NADPH as hydrogen donor.

The protein resides in the nucleus. It is found in the cytoplasm. Its subcellular location is the golgi apparatus membrane. The protein localises to the mitochondrion intermembrane space. Its function is as follows. Participates as a hydrogen donor in redox reactions through the reversible oxidation of its active center dithiol to a disulfide, accompanied by the transfer of 2 electrons and 2 protons. It is involved in many cellular processes, including deoxyribonucleotide synthesis, repair of oxidatively damaged proteins, protein folding, sulfur metabolism, and redox homeostasis. Thioredoxin-dependent enzymes include phosphoadenosine-phosphosulfate reductase MET16, alkyl-hydroperoxide reductase DOT5, thioredoxin peroxidases TSA1 and TSA2, alkyl hydroperoxide reductase AHP1, and peroxiredoxin HYR1. Thioredoxin is also involved in protection against reducing stress. As part of the LMA1 complex, it is involved in the facilitation of vesicle fusion such as homotypic vacuole and ER-derived COPII vesicle fusion with the Golgi. This activity does not require the redox mechanism. This Saccharomyces cerevisiae (strain ATCC 204508 / S288c) (Baker's yeast) protein is Thioredoxin-1 (TRX1).